A 576-amino-acid chain; its full sequence is Arginine--tRNA ligase (576 aa).

Positions 126–136 (ANPTGPMHIGH) match the 'HIGH' region motif.

This sequence belongs to the class-I aminoacyl-tRNA synthetase family. In terms of assembly, monomer.

The protein resides in the cytoplasm. The enzyme catalyses tRNA(Arg) + L-arginine + ATP = L-arginyl-tRNA(Arg) + AMP + diphosphate. The protein is Arginine--tRNA ligase of Rickettsia rickettsii (strain Iowa).